Here is a 356-residue protein sequence, read N- to C-terminus: Glycerol-1-phosphate dehydrogenase [NAD(P)+] (356 aa).

NAD(+)-binding positions include 103–107 (GRSID) and 125–128 (TAAS). D130 contacts substrate. Residue S134 participates in NAD(+) binding. D177 contributes to the substrate binding site. Zn(2+) is bound by residues D177 and H257. H261 is a binding site for substrate. H273 provides a ligand contact to Zn(2+).

Belongs to the glycerol-1-phosphate dehydrogenase family. The cofactor is Zn(2+).

It is found in the cytoplasm. It carries out the reaction sn-glycerol 1-phosphate + NAD(+) = dihydroxyacetone phosphate + NADH + H(+). The enzyme catalyses sn-glycerol 1-phosphate + NADP(+) = dihydroxyacetone phosphate + NADPH + H(+). Its pathway is membrane lipid metabolism; glycerophospholipid metabolism. Its function is as follows. Catalyzes the NAD(P)H-dependent reduction of dihydroxyacetonephosphate (DHAP or glycerone phosphate) to glycerol 1-phosphate (G1P). The G1P thus generated is used as the glycerophosphate backbone of phospholipids in the cellular membranes of Archaea. The sequence is that of Glycerol-1-phosphate dehydrogenase [NAD(P)+] from Methanosarcina acetivorans (strain ATCC 35395 / DSM 2834 / JCM 12185 / C2A).